Here is a 511-residue protein sequence, read N- to C-terminus: Serine/threonine-protein kinase Nek3 (511 aa).

The residue at position 1 (methionine 1) is an N-acetylmethionine. The interaction with VAV2 stretch occupies residues 1–282 (MDNYTVLRVI…EQILDEIKIS (282 aa)). The Protein kinase domain occupies 4–255 (YTVLRVIGQG…ATTLLCRGSL (252 aa)). Residues 10 to 18 (IGQGSFGRA) and lysine 33 contribute to the ATP site. Aspartate 125 serves as the catalytic Proton acceptor. Residue threonine 159 is modified to Phosphothreonine; by autocatalysis. 2 disordered regions span residues 299 to 370 (LGEA…GPSS) and 443 to 511 (GPLS…GERA). Basic and acidic residues predominate over residues 309 to 321 (EEERGRKCSHTEL). Over residues 472-485 (LDEEDTDFEEDNEN) the composition is skewed to acidic residues. At threonine 477 the chain carries Phosphothreonine. Residues 498–511 (YGDGPGGQLLGERA) are compositionally biased toward gly residues.

It belongs to the protein kinase superfamily. NEK Ser/Thr protein kinase family. NIMA subfamily. Interacts with PXN, PRLR, VAV1 and VAV2 and this interaction is prolactin-dependent. Requires Mg(2+) as cofactor. Post-translationally, phosphorylation at Thr-477 regulates its catalytic activity. In terms of tissue distribution, brain.

It is found in the cytoplasm. The protein resides in the cell projection. It localises to the axon. It carries out the reaction L-seryl-[protein] + ATP = O-phospho-L-seryl-[protein] + ADP + H(+). It catalyses the reaction L-threonyl-[protein] + ATP = O-phospho-L-threonyl-[protein] + ADP + H(+). Functionally, protein kinase which influences neuronal morphogenesis and polarity through effects on microtubules. Regulates microtubule acetylation in neurons. Contributes to prolactin-mediated phosphorylation of PXN and VAV2. In Mus musculus (Mouse), this protein is Serine/threonine-protein kinase Nek3 (Nek3).